Reading from the N-terminus, the 253-residue chain is 5-oxoprolinase subunit A (253 aa).

The protein belongs to the LamB/PxpA family. Forms a complex composed of PxpA, PxpB and PxpC.

It carries out the reaction 5-oxo-L-proline + ATP + 2 H2O = L-glutamate + ADP + phosphate + H(+). Functionally, catalyzes the cleavage of 5-oxoproline to form L-glutamate coupled to the hydrolysis of ATP to ADP and inorganic phosphate. The polypeptide is 5-oxoprolinase subunit A (Chloroflexus aurantiacus (strain ATCC 29364 / DSM 637 / Y-400-fl)).